Reading from the N-terminus, the 111-residue chain is Cornifelin (111 aa).

The protein belongs to the cornifelin family. In terms of assembly, directly or indirectly cross-linked to CE proteins loricin and involucrin (IVL).

It localises to the cytoplasm. In terms of biological role, part of the insoluble cornified cell envelope (CE) of stratified squamous epithelia. The chain is Cornifelin (Cnfn) from Mus musculus (Mouse).